The sequence spans 799 residues: Serine/threonine-protein kinase AfsK (799 aa).

One can recognise a Protein kinase domain in the interval 16–271; that stretch reads FEVLGRLGAG…QAQLAPHLFG (256 aa). Residues 22–30 and Lys-44 each bind ATP; that span reads LGAGGMGLV. Phosphoserine; by autocatalysis is present on Ser-71. Residue Asp-138 is the Proton acceptor of the active site. Thr-168 carries the post-translational modification Phosphothreonine; by autocatalysis. Disordered regions lie at residues 295–343 and 393–426; these read RRNG…PAPP and LAAS…PAGW. Composition is skewed to pro residues over residues 325–343 and 411–421; these read HAPP…PAPP and VPAPAPAPPEA.

Belongs to the protein kinase superfamily. Ser/Thr protein kinase family. In terms of assembly, interacts (via the N-terminal kinase domain) with KbpA; the interaction prevents autophosphorylation of AfsK. In terms of processing, autophosphorylated mainly on threonine residues. Some phosphorylation on serine residues. Autophosphorylation on Thr-168 is the major site enhancing kinase activity towards AfsR, and is regulated though interaction with KbpA.

The enzyme catalyses L-seryl-[protein] + ATP = O-phospho-L-seryl-[protein] + ADP + H(+). It carries out the reaction L-threonyl-[protein] + ATP = O-phospho-L-threonyl-[protein] + ADP + H(+). Its function is as follows. Involved in the regulation of secondary metabolism by phosphorylating, on both Ser and Thr, the AfsR global regulatory protein involved in the control of secondary metabolism. This chain is Serine/threonine-protein kinase AfsK (afsK), found in Streptomyces coelicolor (strain ATCC BAA-471 / A3(2) / M145).